We begin with the raw amino-acid sequence, 322 residues long: Ribose-phosphate pyrophosphokinase (322 aa).

Residues 43–45 and 102–103 each bind ATP; these read DGE and RQ. His137 and Asp177 together coordinate Mg(2+). Residue Lys201 is part of the active site. D-ribose 5-phosphate-binding positions include Arg203, Asp227, and 231–235; that span reads DTAGT.

It belongs to the ribose-phosphate pyrophosphokinase family. Class I subfamily. As to quaternary structure, homohexamer. Mg(2+) serves as cofactor.

The protein localises to the cytoplasm. The catalysed reaction is D-ribose 5-phosphate + ATP = 5-phospho-alpha-D-ribose 1-diphosphate + AMP + H(+). Its pathway is metabolic intermediate biosynthesis; 5-phospho-alpha-D-ribose 1-diphosphate biosynthesis; 5-phospho-alpha-D-ribose 1-diphosphate from D-ribose 5-phosphate (route I): step 1/1. Functionally, involved in the biosynthesis of the central metabolite phospho-alpha-D-ribosyl-1-pyrophosphate (PRPP) via the transfer of pyrophosphoryl group from ATP to 1-hydroxyl of ribose-5-phosphate (Rib-5-P). The protein is Ribose-phosphate pyrophosphokinase of Xylella fastidiosa (strain Temecula1 / ATCC 700964).